The sequence spans 447 residues: UDP-N-acetylmuramoylalanine--D-glutamate ligase (447 aa).

Residue 112–118 (GTNGKST) coordinates ATP.

It belongs to the MurCDEF family.

Its subcellular location is the cytoplasm. It catalyses the reaction UDP-N-acetyl-alpha-D-muramoyl-L-alanine + D-glutamate + ATP = UDP-N-acetyl-alpha-D-muramoyl-L-alanyl-D-glutamate + ADP + phosphate + H(+). It functions in the pathway cell wall biogenesis; peptidoglycan biosynthesis. Cell wall formation. Catalyzes the addition of glutamate to the nucleotide precursor UDP-N-acetylmuramoyl-L-alanine (UMA). This is UDP-N-acetylmuramoylalanine--D-glutamate ligase from Legionella pneumophila (strain Lens).